Reading from the N-terminus, the 42-residue chain is Thymosin beta-10 (42 aa).

Basic and acidic residues-rich tracts occupy residues 1–25 (MADK…ETQE) and 33–42 (ETIEQEKQAK). The segment at 1-42 (MADKPDMGEINSFDKAKLKKTETQEKNTLPTKETIEQEKQAK) is disordered. Ala-2 carries the post-translational modification N-acetylalanine. Lys-4 bears the N6-acetyllysine mark. The residue at position 12 (Ser-12) is a Phosphoserine. Residue Lys-15 is modified to N6-acetyllysine. Thr-21, Thr-23, and Thr-34 each carry phosphothreonine. An N6-acetyllysine modification is found at Lys-39.

This sequence belongs to the thymosin beta family.

It is found in the cytoplasm. The protein localises to the cytoskeleton. In terms of biological role, plays an important role in the organization of the cytoskeleton. Binds to and sequesters actin monomers (G actin) and therefore inhibits actin polymerization. This Sus scrofa (Pig) protein is Thymosin beta-10 (TMSB10).